Consider the following 465-residue polypeptide: Ribulose bisphosphate carboxylase large chain (465 aa).

N6,N6,N6-trimethyllysine is present on lysine 4. Asparagine 113 and threonine 163 together coordinate substrate. Lysine 165 functions as the Proton acceptor in the catalytic mechanism. Residue lysine 167 coordinates substrate. 3 residues coordinate Mg(2+): lysine 191, aspartate 193, and glutamate 194. The residue at position 191 (lysine 191) is an N6-carboxylysine. Catalysis depends on histidine 284, which acts as the Proton acceptor. 3 residues coordinate substrate: arginine 285, histidine 317, and serine 369.

It belongs to the RuBisCO large chain family. Type I subfamily. In terms of assembly, heterohexadecamer of 8 large chains and 8 small chains; disulfide-linked. The disulfide link is formed within the large subunit homodimers. Mg(2+) is required as a cofactor. The disulfide bond which can form in the large chain dimeric partners within the hexadecamer appears to be associated with oxidative stress and protein turnover.

It is found in the plastid. The protein localises to the chloroplast. It catalyses the reaction 2 (2R)-3-phosphoglycerate + 2 H(+) = D-ribulose 1,5-bisphosphate + CO2 + H2O. The enzyme catalyses D-ribulose 1,5-bisphosphate + O2 = 2-phosphoglycolate + (2R)-3-phosphoglycerate + 2 H(+). RuBisCO catalyzes two reactions: the carboxylation of D-ribulose 1,5-bisphosphate, the primary event in carbon dioxide fixation, as well as the oxidative fragmentation of the pentose substrate in the photorespiration process. Both reactions occur simultaneously and in competition at the same active site. The chain is Ribulose bisphosphate carboxylase large chain from Cornus florida (Flowering dogwood).